The primary structure comprises 162 residues: Shikimate kinase (162 aa).

11–16 (GSGKSS) serves as a coordination point for ATP. Residue S15 coordinates Mg(2+). Substrate-binding residues include D33, R57, and G80. Residue R116 coordinates ATP. R132 lines the substrate pocket.

This sequence belongs to the shikimate kinase family. In terms of assembly, monomer. Mg(2+) serves as cofactor.

The protein resides in the cytoplasm. It carries out the reaction shikimate + ATP = 3-phosphoshikimate + ADP + H(+). The protein operates within metabolic intermediate biosynthesis; chorismate biosynthesis; chorismate from D-erythrose 4-phosphate and phosphoenolpyruvate: step 5/7. Catalyzes the specific phosphorylation of the 3-hydroxyl group of shikimic acid using ATP as a cosubstrate. In Helicobacter pylori (strain P12), this protein is Shikimate kinase.